The primary structure comprises 236 residues: Ribose-5-phosphate isomerase A (236 aa).

Substrate-binding positions include 33–36 (TGST), 90–93 (DGAD), and 103–106 (KGGG). Residue glutamate 112 is the Proton acceptor of the active site. Lysine 130 is a binding site for substrate.

It belongs to the ribose 5-phosphate isomerase family. Homodimer.

It carries out the reaction aldehydo-D-ribose 5-phosphate = D-ribulose 5-phosphate. The protein operates within carbohydrate degradation; pentose phosphate pathway; D-ribose 5-phosphate from D-ribulose 5-phosphate (non-oxidative stage): step 1/1. Catalyzes the reversible conversion of ribose-5-phosphate to ribulose 5-phosphate. This Nostoc sp. (strain PCC 7120 / SAG 25.82 / UTEX 2576) protein is Ribose-5-phosphate isomerase A.